Consider the following 232-residue polypeptide: Demethylmenaquinone methyltransferase (232 aa).

S-adenosyl-L-methionine is bound by residues threonine 58, aspartate 79, and 104-105 (NA).

The protein belongs to the class I-like SAM-binding methyltransferase superfamily. MenG/UbiE family.

It carries out the reaction a 2-demethylmenaquinol + S-adenosyl-L-methionine = a menaquinol + S-adenosyl-L-homocysteine + H(+). The protein operates within quinol/quinone metabolism; menaquinone biosynthesis; menaquinol from 1,4-dihydroxy-2-naphthoate: step 2/2. Functionally, methyltransferase required for the conversion of demethylmenaquinol (DMKH2) to menaquinol (MKH2). This is Demethylmenaquinone methyltransferase from Bacillus licheniformis (strain ATCC 14580 / DSM 13 / JCM 2505 / CCUG 7422 / NBRC 12200 / NCIMB 9375 / NCTC 10341 / NRRL NRS-1264 / Gibson 46).